The primary structure comprises 452 residues: Bifunctional protein GlmU (452 aa).

The segment at 1-226 is pyrophosphorylase; that stretch reads MSLDIVILAA…AMEVQGANDR (226 aa). UDP-N-acetyl-alpha-D-glucosamine is bound by residues 8 to 11, Lys22, Gln73, 78 to 79, 99 to 101, Gly136, Glu151, Asn166, and Asn224; these read LAAG, GT, and YGD. A Mg(2+)-binding site is contributed by Asp101. Residue Asn224 coordinates Mg(2+). A linker region spans residues 227–247; the sequence is IQLAELERHYQLRAARRLMAQ. An N-acetyltransferase region spans residues 248–452; that stretch reads GVTLRDPARF…IDGWQRPTKK (205 aa). UDP-N-acetyl-alpha-D-glucosamine contacts are provided by Arg330 and Lys348. His360 serves as the catalytic Proton acceptor. UDP-N-acetyl-alpha-D-glucosamine is bound by residues Tyr363 and Asn374. Residues Ala377, 383 to 384, Ser402, Ala420, and Arg437 each bind acetyl-CoA; that span reads NY.

This sequence in the N-terminal section; belongs to the N-acetylglucosamine-1-phosphate uridyltransferase family. It in the C-terminal section; belongs to the transferase hexapeptide repeat family. Homotrimer. Mg(2+) is required as a cofactor.

It localises to the cytoplasm. The catalysed reaction is alpha-D-glucosamine 1-phosphate + acetyl-CoA = N-acetyl-alpha-D-glucosamine 1-phosphate + CoA + H(+). The enzyme catalyses N-acetyl-alpha-D-glucosamine 1-phosphate + UTP + H(+) = UDP-N-acetyl-alpha-D-glucosamine + diphosphate. It functions in the pathway nucleotide-sugar biosynthesis; UDP-N-acetyl-alpha-D-glucosamine biosynthesis; N-acetyl-alpha-D-glucosamine 1-phosphate from alpha-D-glucosamine 6-phosphate (route II): step 2/2. The protein operates within nucleotide-sugar biosynthesis; UDP-N-acetyl-alpha-D-glucosamine biosynthesis; UDP-N-acetyl-alpha-D-glucosamine from N-acetyl-alpha-D-glucosamine 1-phosphate: step 1/1. Its pathway is bacterial outer membrane biogenesis; LPS lipid A biosynthesis. Functionally, catalyzes the last two sequential reactions in the de novo biosynthetic pathway for UDP-N-acetylglucosamine (UDP-GlcNAc). The C-terminal domain catalyzes the transfer of acetyl group from acetyl coenzyme A to glucosamine-1-phosphate (GlcN-1-P) to produce N-acetylglucosamine-1-phosphate (GlcNAc-1-P), which is converted into UDP-GlcNAc by the transfer of uridine 5-monophosphate (from uridine 5-triphosphate), a reaction catalyzed by the N-terminal domain. The chain is Bifunctional protein GlmU from Stutzerimonas stutzeri (strain A1501) (Pseudomonas stutzeri).